The sequence spans 265 residues: Orotidine 5'-phosphate decarboxylase (265 aa).

Residues Asp37, 59–61 (KTH), 91–100 (DRKFADIGNT), Tyr217, and Arg236 contribute to the substrate site. Catalysis depends on Lys93, which acts as the Proton donor.

This sequence belongs to the OMP decarboxylase family.

It catalyses the reaction orotidine 5'-phosphate + H(+) = UMP + CO2. Its pathway is pyrimidine metabolism; UMP biosynthesis via de novo pathway; UMP from orotate: step 2/2. In Saccharomycopsis fibuligera (Yeast), this protein is Orotidine 5'-phosphate decarboxylase (URA3).